The chain runs to 397 residues: Acetate kinase (397 aa).

Asn-8 provides a ligand contact to Mg(2+). Position 15 (Lys-15) interacts with ATP. Arg-89 contributes to the substrate binding site. Catalysis depends on Asp-146, which acts as the Proton donor/acceptor. ATP contacts are provided by residues 206 to 210, 283 to 285, and 331 to 335; these read HVGNG, DMR, and GMGEN. Glu-383 lines the Mg(2+) pocket.

Belongs to the acetokinase family. As to quaternary structure, homodimer. The cofactor is Mg(2+). Requires Mn(2+) as cofactor.

It localises to the cytoplasm. It catalyses the reaction acetate + ATP = acetyl phosphate + ADP. The protein operates within metabolic intermediate biosynthesis; acetyl-CoA biosynthesis; acetyl-CoA from acetate: step 1/2. Catalyzes the formation of acetyl phosphate from acetate and ATP. Can also catalyze the reverse reaction. This chain is Acetate kinase, found in Streptococcus agalactiae serotype III (strain NEM316).